The following is a 476-amino-acid chain: MEFNFALITTELALFILGLATFVLGLLVPSHSRRGLGSFALLGLLLVLGITIINWSNQGVLLDGMYLVDQYATFFKILCLISAILVVLGSFRYIDKQVGNQFEYYSTVIFTTLGMVVMASAGDFITLYLGLELMTISFVILVAFRSFEAKSLEAGMKYILLAGLSSAVLLYGLSLVYGATGTILIGEVAREIADKGSTPLLIVGVVMLVAGLGFKISAVPFHMWSPDVYEGAPTPVTSFLAVGSKAASFAVLLRLFAGGFGGIQEQWTLLVAVLAALSMLIGNLVAIPQTNIKRMLAYSSIAQAGYIMVGLVSATEAGIKGVMFYAFLYVFATIGAFTVVAIVSNQTNSDEIRDYAGLIQRAPLAASVMLICLLSMAGIPPLAGFVGKFYLFKTVVENHMWLVYLGLIMSMVSVYYYLRVALVMFRDEPKESAPIHVGGAATITLVITMVATIILGIYPGPLAEVANMAAQSFLLK.

A run of 14 helical transmembrane segments spans residues 8 to 28 (ITTELALFILGLATFVLGLLV), 35 to 55 (GLGSFALLGLLLVLGITIINW), 71 to 91 (YATFFKILCLISAILVVLGSF), 102 to 122 (FEYYSTVIFTTLGMVVMASAG), 124 to 144 (FITLYLGLELMTISFVILVAF), 159 to 179 (ILLAGLSSAVLLYGLSLVYGA), 201 to 221 (LIVGVVMLVAGLGFKISAVPF), 239 to 259 (FLAVGSKAASFAVLLRLFAGG), 267 to 287 (WTLLVAVLAALSMLIGNLVAI), 295 to 315 (MLAYSSIAQAGYIMVGLVSAT), 322 to 342 (VMFYAFLYVFATIGAFTVVAI), 366 to 386 (ASVMLICLLSMAGIPPLAGFV), 405 to 425 (LGLIMSMVSVYYYLRVALVMF), and 437 to 457 (VGGAATITLVITMVATIILGI).

It belongs to the complex I subunit 2 family. In terms of assembly, NDH-1 is composed of 14 different subunits. Subunits NuoA, H, J, K, L, M, N constitute the membrane sector of the complex.

It localises to the cell membrane. It catalyses the reaction a quinone + NADH + 5 H(+)(in) = a quinol + NAD(+) + 4 H(+)(out). Its function is as follows. NDH-1 shuttles electrons from NADH, via FMN and iron-sulfur (Fe-S) centers, to quinones in the respiratory chain. The immediate electron acceptor for the enzyme in this species is believed to be a menaquinone. Couples the redox reaction to proton translocation (for every two electrons transferred, four hydrogen ions are translocated across the cytoplasmic membrane), and thus conserves the redox energy in a proton gradient. This chain is NADH-quinone oxidoreductase subunit N, found in Desulforamulus reducens (strain ATCC BAA-1160 / DSM 100696 / MI-1) (Desulfotomaculum reducens).